The primary structure comprises 258 residues: NAD kinase (258 aa).

The Proton acceptor role is filled by aspartate 51. Residues 51 to 52, lysine 56, 119 to 120, lysine 130, aspartate 149, 160 to 165, and alanine 184 contribute to the NAD(+) site; these read DG, ND, and TAYSLS.

Belongs to the NAD kinase family. The cofactor is a divalent metal cation.

The protein localises to the cytoplasm. It catalyses the reaction NAD(+) + ATP = ADP + NADP(+) + H(+). Involved in the regulation of the intracellular balance of NAD and NADP, and is a key enzyme in the biosynthesis of NADP. Catalyzes specifically the phosphorylation on 2'-hydroxyl of the adenosine moiety of NAD to yield NADP. This chain is NAD kinase, found in Thermotoga petrophila (strain ATCC BAA-488 / DSM 13995 / JCM 10881 / RKU-1).